The chain runs to 63 residues: Large ribosomal subunit protein uL29 (63 aa).

The protein belongs to the universal ribosomal protein uL29 family.

The sequence is that of Large ribosomal subunit protein uL29 (rpmC) from Buchnera aphidicola subsp. Acyrthosiphon kondoi (Acyrthosiphon kondoi symbiotic bacterium).